Consider the following 1770-residue polypeptide: Transposon Ty2-OR2 Gag-Pol polyprotein (1770 aa).

Disordered stretches follow at residues 1–88 and 359–449; these read MESQ…YQQH and QHSE…SNDE. Polar residues-rich tracts occupy residues 19 to 39 and 49 to 60; these read ASVT…SASN and KVNSQEETTPGT. The interval 295 to 397 is RNA-binding; sequence ENNINVSDRL…SSKPRAAKAH (103 aa). Positions 369-381 are enriched in low complexity; it reads TSPNTTNTKVTTR. Composition is skewed to polar residues over residues 399 to 408 and 415 to 435; these read IATSSKFSRV and ESTV…GQQQ. Residue aspartate 457 is the For protease activity; shared with dimeric partner of the active site. The segment at 579–636 is integrase-type zinc finger-like; the sequence is NVNKSKSVNKYPYPLIHRMLGHANFRSIQKSLKKNAVTYLKESDIEWSNASTYQCPDC. The Integrase catalytic domain occupies 656-831; sequence ESYEPFQYLH…AGLDITTILP (176 aa). Positions 667 and 732 each coordinate Mg(2+). Disordered regions lie at residues 1005 to 1038, 1057 to 1135, 1146 to 1165, and 1170 to 1205; these read GGTI…MIDL, GGTE…KSSK, LPLP…VSKD, and HSRQ…TEIE. Composition is skewed to polar residues over residues 1009 to 1024 and 1065 to 1082; these read ESDT…FTAR and QRNS…STPS. Over residues 1151–1165 the composition is skewed to basic and acidic residues; that stretch reads LTHKSPTDTSDVSKD. The Bipartite nuclear localization signal signature appears at 1193 to 1227; sequence KKRSLEDNETEIEVSRDTWNNKNMRSLEPPRSKKR. The 139-residue stretch at 1353–1491 folds into the Reverse transcriptase Ty1/copia-type domain; that stretch reads NDYYITQLDI…DILGLEIKYQ (139 aa). 6 residues coordinate Mg(2+): aspartate 1361, aspartate 1442, aspartate 1443, aspartate 1625, glutamate 1667, and aspartate 1700. The region spanning 1625–1767 is the RNase H Ty1/copia-type domain; the sequence is DASYGNQPYY…IKTFKLLTNK (143 aa).

The capsid protein forms a homotrimer, from which the VLPs are assembled. The protease is a homodimer, whose active site consists of two apposed aspartic acid residues. Post-translationally, initially, virus-like particles (VLPs) are composed of the structural unprocessed proteins Gag and Gag-Pol, and also contain the host initiator methionine tRNA (tRNA(i)-Met) which serves as a primer for minus-strand DNA synthesis, and a dimer of genomic Ty RNA. Processing of the polyproteins occurs within the particle and proceeds by an ordered pathway, called maturation. First, the protease (PR) is released by autocatalytic cleavage of the Gag-Pol polyprotein, and this cleavage is a prerequisite for subsequent processing at the remaining sites to release the mature structural and catalytic proteins. Maturation takes place prior to the RT reaction and is required to produce transposition-competent VLPs.

The protein localises to the cytoplasm. Its subcellular location is the nucleus. It catalyses the reaction DNA(n) + a 2'-deoxyribonucleoside 5'-triphosphate = DNA(n+1) + diphosphate. The enzyme catalyses Endonucleolytic cleavage to 5'-phosphomonoester.. Its function is as follows. Capsid protein (CA) is the structural component of the virus-like particle (VLP), forming the shell that encapsulates the retrotransposons dimeric RNA genome. The particles are assembled from trimer-clustered units and there are holes in the capsid shells that allow for the diffusion of macromolecules. CA also has nucleocapsid-like chaperone activity, promoting primer tRNA(i)-Met annealing to the multipartite primer-binding site (PBS), dimerization of Ty2 RNA and initiation of reverse transcription. The aspartyl protease (PR) mediates the proteolytic cleavages of the Gag and Gag-Pol polyproteins after assembly of the VLP. In terms of biological role, reverse transcriptase/ribonuclease H (RT) is a multifunctional enzyme that catalyzes the conversion of the retro-elements RNA genome into dsDNA within the VLP. The enzyme displays a DNA polymerase activity that can copy either DNA or RNA templates, and a ribonuclease H (RNase H) activity that cleaves the RNA strand of RNA-DNA heteroduplexes during plus-strand synthesis and hydrolyzes RNA primers. The conversion leads to a linear dsDNA copy of the retrotransposon that includes long terminal repeats (LTRs) at both ends. Functionally, integrase (IN) targets the VLP to the nucleus, where a subparticle preintegration complex (PIC) containing at least integrase and the newly synthesized dsDNA copy of the retrotransposon must transit the nuclear membrane. Once in the nucleus, integrase performs the integration of the dsDNA into the host genome. This Saccharomyces cerevisiae (strain ATCC 204508 / S288c) (Baker's yeast) protein is Transposon Ty2-OR2 Gag-Pol polyprotein (TY2B-OR2).